The sequence spans 300 residues: MKQITIASRESKLALWQTNFVKNRIQSELNIPCEISTMKTQGDIILDQPLNKIGGKALFMKELEIAMLNNKADIAVHSLKDVPYQLPQGFCLAGFMPREDPRDAFVSNKYNSIDDLPKGAIVGTSSLRRKAQLLHYRDDLEIRDLRGNVQTRLSKLDNGDYDAIILASAGLIRLELVERITQFIPVEISLPAVGQGIVVIEALERDNDLLEKIQKLNCRESSRVATAERAFNQELKGGCHVAIGAYAELDNNQITLMAMVASSDGKKILKRKMIGDDPTKLGKLLAQEMIALGAYKILES.

Cysteine 239 carries the post-translational modification S-(dipyrrolylmethanemethyl)cysteine.

Belongs to the HMBS family. Monomer. Dipyrromethane serves as cofactor.

It carries out the reaction 4 porphobilinogen + H2O = hydroxymethylbilane + 4 NH4(+). Its pathway is porphyrin-containing compound metabolism; protoporphyrin-IX biosynthesis; coproporphyrinogen-III from 5-aminolevulinate: step 2/4. Tetrapolymerization of the monopyrrole PBG into the hydroxymethylbilane pre-uroporphyrinogen in several discrete steps. This is Porphobilinogen deaminase from Francisella tularensis subsp. novicida (strain U112).